The sequence spans 502 residues: Glycerol kinase (502 aa).

ADP is bound at residue threonine 16. Positions 16, 17, and 18 each coordinate ATP. Threonine 16 contributes to the sn-glycerol 3-phosphate binding site. Arginine 20 contacts ADP. Sn-glycerol 3-phosphate contacts are provided by arginine 86, glutamate 87, tyrosine 138, and aspartate 247. Residues arginine 86, glutamate 87, tyrosine 138, aspartate 247, and glutamine 248 each contribute to the glycerol site. 2 residues coordinate ADP: threonine 269 and glycine 312. The ATP site is built by threonine 269, glycine 312, glutamine 316, and glycine 413. Residues glycine 413 and asparagine 417 each contribute to the ADP site.

This sequence belongs to the FGGY kinase family.

The catalysed reaction is glycerol + ATP = sn-glycerol 3-phosphate + ADP + H(+). It participates in polyol metabolism; glycerol degradation via glycerol kinase pathway; sn-glycerol 3-phosphate from glycerol: step 1/1. Inhibited by fructose 1,6-bisphosphate (FBP). Its function is as follows. Key enzyme in the regulation of glycerol uptake and metabolism. Catalyzes the phosphorylation of glycerol to yield sn-glycerol 3-phosphate. The protein is Glycerol kinase of Dechloromonas aromatica (strain RCB).